The primary structure comprises 316 residues: Pyridoxal 5'-phosphate synthase subunit PdxS (316 aa).

Asp-44 serves as a coordination point for D-ribose 5-phosphate. The active-site Schiff-base intermediate with D-ribose 5-phosphate is Lys-101. Gly-173 contributes to the D-ribose 5-phosphate binding site. Lys-185 provides a ligand contact to D-glyceraldehyde 3-phosphate. D-ribose 5-phosphate contacts are provided by residues Gly-234 and 255–256 (GS).

Belongs to the PdxS/SNZ family. As to quaternary structure, in the presence of PdxT, forms a dodecamer of heterodimers.

The enzyme catalyses aldehydo-D-ribose 5-phosphate + D-glyceraldehyde 3-phosphate + L-glutamine = pyridoxal 5'-phosphate + L-glutamate + phosphate + 3 H2O + H(+). It participates in cofactor biosynthesis; pyridoxal 5'-phosphate biosynthesis. In terms of biological role, catalyzes the formation of pyridoxal 5'-phosphate from ribose 5-phosphate (RBP), glyceraldehyde 3-phosphate (G3P) and ammonia. The ammonia is provided by the PdxT subunit. Can also use ribulose 5-phosphate and dihydroxyacetone phosphate as substrates, resulting from enzyme-catalyzed isomerization of RBP and G3P, respectively. This is Pyridoxal 5'-phosphate synthase subunit PdxS from Sulfurisphaera tokodaii (strain DSM 16993 / JCM 10545 / NBRC 100140 / 7) (Sulfolobus tokodaii).